The sequence spans 666 residues: Endogenous retrovirus group K member 24 Gag polyprotein (666 aa).

Gly-2 carries the N-myristoyl glycine lipid modification. The interval 165–264 (GKGPELVGPS…APPSRQGSEL (100 aa)) is disordered. Positions 232-247 (GMPPAPQGRAPYPQPP) are enriched in pro residues. 2 CCHC-type zinc fingers span residues 544–561 (GKCY…NCPV) and 580–597 (DLCP…QCRS). The interval 598 to 641 (KFDKNGQPLSGNEQRGQPQAPQQTGAFPIQPFVPQGFQGQQPPL) is disordered. Residues 604–622 (QPLSGNEQRGQPQAPQQTG) show a composition bias toward polar residues. The span at 624 to 640 (FPIQPFVPQGFQGQQPP) shows a compositional bias: low complexity.

This sequence belongs to the beta type-B retroviral Gag protein family. HERV class-II K(HML-2) gag subfamily. Post-translationally, myristoylation is essential for retroviral assembly. Alteration of the glycine residue leads to a block in the budding of particles and an accumulation of Gag inside the cell. In terms of processing, specific enzymatic cleavages may yield mature proteins.

Its subcellular location is the cell membrane. Its function is as follows. The products of the Gag polyproteins of infectious retroviruses perform highly complex orchestrated tasks during the assembly, budding, maturation, and infection stages of the viral replication cycle. During viral assembly, the proteins form membrane associations and self-associations that ultimately result in budding of an immature virion from the infected cell. Gag precursors also function during viral assembly to selectively bind and package two plus strands of genomic RNA. Endogenous Gag proteins may have kept, lost or modified their original function during evolution. The sequence is that of Endogenous retrovirus group K member 24 Gag polyprotein (ERVK-24) from Homo sapiens (Human).